A 544-amino-acid chain; its full sequence is Chaperonin GroEL (544 aa).

ATP-binding positions include 29 to 32 (TLGP), 86 to 90 (DGTTT), Gly413, 476 to 478 (NAA), and Asp492.

The protein belongs to the chaperonin (HSP60) family. In terms of assembly, forms a cylinder of 14 subunits composed of two heptameric rings stacked back-to-back. Interacts with the co-chaperonin GroES.

The protein resides in the cytoplasm. It catalyses the reaction ATP + H2O + a folded polypeptide = ADP + phosphate + an unfolded polypeptide.. Together with its co-chaperonin GroES, plays an essential role in assisting protein folding. The GroEL-GroES system forms a nano-cage that allows encapsulation of the non-native substrate proteins and provides a physical environment optimized to promote and accelerate protein folding. This chain is Chaperonin GroEL, found in Bacillus pumilus (strain SAFR-032).